Reading from the N-terminus, the 273-residue chain is WIMGHMVNAIAQIDEFVNLGANSIETDVSFDKNANPEYTYHGIPCDCGRTCTKSEKFNVFLQGLQKATTPGDSKYQEKLVLVVFDLKSSSLYDNQASDAGKKLAKSLLQNYWKNGNNGGRAYIVLSIPNLAHYKLITGFKETLKTEGHPELMEKVGYDFSGNDDIDQVAKAYKKAGVTGHVWQSDGITNCLPRGLDRVRQAVANRDSSNGFINKVYYWTVDKRSTTRGALDAGVDGIMTNYPDVIAVVLSESAYKSKFRIATYEDNPWETFKN.

H5 is an active-site residue. Mg(2+) is bound by residues E25 and D27. The active-site Nucleophile is the H41. 2 disulfide bridges follow: C45/C51 and C47/C190. D85 is a binding site for Mg(2+).

It belongs to the arthropod phospholipase D family. Class II subfamily. Mg(2+) serves as cofactor. As to expression, expressed by the venom gland.

The protein localises to the secreted. It carries out the reaction an N-(acyl)-sphingosylphosphocholine = an N-(acyl)-sphingosyl-1,3-cyclic phosphate + choline. The catalysed reaction is an N-(acyl)-sphingosylphosphoethanolamine = an N-(acyl)-sphingosyl-1,3-cyclic phosphate + ethanolamine. The enzyme catalyses a 1-acyl-sn-glycero-3-phosphocholine = a 1-acyl-sn-glycero-2,3-cyclic phosphate + choline. It catalyses the reaction a 1-acyl-sn-glycero-3-phosphoethanolamine = a 1-acyl-sn-glycero-2,3-cyclic phosphate + ethanolamine. Functionally, dermonecrotic toxins cleave the phosphodiester linkage between the phosphate and headgroup of certain phospholipids (sphingolipid and lysolipid substrates), forming an alcohol (often choline) and a cyclic phosphate. This toxin acts on sphingomyelin (SM). It may also act on ceramide phosphoethanolamine (CPE), lysophosphatidylcholine (LPC) and lysophosphatidylethanolamine (LPE), but not on lysophosphatidylserine (LPS), and lysophosphatidylglycerol (LPG). It acts by transphosphatidylation, releasing exclusively cyclic phosphate products as second products. Induces dermonecrosis, hemolysis, increased vascular permeability, edema, inflammatory response, and platelet aggregation. The polypeptide is Dermonecrotic toxin LdSicTox-alphaIB3ai (Loxosceles deserta (Desert recluse spider)).